Here is a 144-residue protein sequence, read N- to C-terminus: MRLNTLSPAAGSKSAAKRVGRGIGSGTGKTCGRGHKGQKSRSGGGVRIGFEGGQMPLKIRLPKFGFTSRKAMVSAEVRISELAKVNGDVVDLSTLKDANLVTRNIQFAKIVLSGTIERPVTVKGLKVTKGARAAIEAAGGKIEE.

Residues methionine 1–isoleucine 48 form a disordered region. The segment covering arginine 21–cysteine 31 has biased composition (gly residues).

The protein belongs to the universal ribosomal protein uL15 family. As to quaternary structure, part of the 50S ribosomal subunit.

Its function is as follows. Binds to the 23S rRNA. The polypeptide is Large ribosomal subunit protein uL15 (Shewanella woodyi (strain ATCC 51908 / MS32)).